Reading from the N-terminus, the 243-residue chain is Probable transcriptional regulatory protein Bpet3099 (243 aa).

The segment at Met-1–Arg-21 is disordered.

The protein belongs to the TACO1 family.

The protein resides in the cytoplasm. In Bordetella petrii (strain ATCC BAA-461 / DSM 12804 / CCUG 43448), this protein is Probable transcriptional regulatory protein Bpet3099.